Here is a 562-residue protein sequence, read N- to C-terminus: Transcriptional adapter 2A (562 aa).

A ZZ-type zinc finger spans residues 91 to 146; it reads KDANRCATCRCSLTEPYIKCSECLDTLLCLQCFSRGKEAFSHRNNHAYIIVRDNIQ. Zn(2+) contacts are provided by C96, C99, C110, C113, C119, C122, H132, and H136. An SANT domain is found at 154–198; that stretch reads WTARDERILLKTLRTHGYGNWEAVSQALDQRHEPAEVRRHYHDCY. The SWIRM domain occupies 471–562; that stretch reads CLTPTEYNFS…GHISRPPSYG (92 aa).

Component of the Ada2a-containing (ATAC) complex composed of at least Ada2a, Atac1, Hcf, Ada3, Gcn5, Mocs2B, Charac-14, Atac3, Atac2, NC2beta and wds. Component of a complex that does not include Gcn5 or Ada3.

The protein localises to the nucleus. The protein resides in the chromosome. In terms of biological role, component of the histone acetyltransferase (HAT) complex ATAC; predominantly involved in acetylation of histone H4, including at Lys-6 (H4K5ac) and Lys-13 (H4K12ac). May be part of several different complexes, including Gcn5-independent complexes involved in RNA polymerase II-dependent transcription. The sequence is that of Transcriptional adapter 2A from Drosophila melanogaster (Fruit fly).